We begin with the raw amino-acid sequence, 614 residues long: Glucose oxidase 1 (614 aa).

The first 15 residues, 1-15, serve as a signal peptide directing secretion; that stretch reads MKSIILSCFVISAAA. FAD contacts are provided by leucine 52, threonine 53, and glutamate 73. An N-linked (GlcNAc...) asparagine glycan is attached at asparagine 112. Residues 117–136 form a disordered region; it reads IRSGNGLGGSTLTNGGSWTR. Serine 126, asparagine 130, glycine 131, and serine 133 together coordinate FAD. 2 N-linked (GlcNAc...) asparagine glycosylation sites follow: asparagine 184 and asparagine 191. Cysteine 187 and cysteine 229 are oxidised to a cystine. Valine 273 is an FAD binding site. N-linked (GlcNAc...) asparagine glycosylation is found at asparagine 279, asparagine 383, and asparagine 416. Histidine 544 (proton acceptor) is an active-site residue. Positions 565 and 566 each coordinate O2. 2 residues coordinate FAD: glycine 577 and methionine 589.

It belongs to the GMC oxidoreductase family. In terms of assembly, homodimer. Requires FAD as cofactor.

The protein resides in the secreted. The protein localises to the cell wall. It is found in the cytoplasm. It localises to the extracellular space. Its subcellular location is the extracellular matrix. The enzyme catalyses beta-D-glucose + O2 = D-glucono-1,5-lactone + H2O2. Functionally, glucose oxidase catalyzes the oxidation of beta-D-glucose to D-glucono-delta-lactone and hydrogen peroxide in the presence of molecular oxygen. This chain is Glucose oxidase 1, found in Penicillium expansum (Blue mold rot fungus).